Here is an 87-residue protein sequence, read N- to C-terminus: UPF0250 protein BUsg_472 (87 aa).

The protein belongs to the UPF0250 family.

The sequence is that of UPF0250 protein BUsg_472 from Buchnera aphidicola subsp. Schizaphis graminum (strain Sg).